The primary structure comprises 199 residues: Inner membrane protein E199L (199 aa).

Residues 150-170 form a helical membrane-spanning segment; sequence INVMNHPFLTLILIILILIII.

This sequence belongs to the asfivirus E199L family. As to quaternary structure, interacts with host PYCR2; this interaction results in autophagy activation. Contains intramolecular disulfide bonds.

Its subcellular location is the virion membrane. It localises to the host membrane. Essential for viral fusion with host endosomal membrane and core release. Not required for virus morphogenesis and egress. Induces complete autophagy through the interaction with and down-regulation of host PYCR2. In Ornithodoros (relapsing fever ticks), this protein is Inner membrane protein E199L.